The chain runs to 521 residues: Cytochrome P450 monooxygenase sdnF (521 aa).

The helical transmembrane segment at 19–39 threads the bilayer; that stretch reads YLGLLLSGTVLYTVYKLIIAI. Residues Asn178, Asn186, Asn191, Asn309, and Asn416 are each glycosylated (N-linked (GlcNAc...) asparagine). Cys460 contributes to the heme binding site.

Belongs to the cytochrome P450 family. It depends on heme as a cofactor.

Its subcellular location is the membrane. It participates in antibiotic biosynthesis. Functionally, cytochrome P450 monooxygenase; part of the gene cluster that mediates the biosynthesis of sordarin and hypoxysordarin, glycoside antibiotics with a unique tetracyclic diterpene aglycone structure. First, the geranylgeranyl diphosphate synthase sdnC constructs GGDP from farnesyl diphosphate and isopentenyl diphosphate. The diterpene cyclase sdnA then catalyzes the cyclization of GGDP to afford cycloaraneosene. Cycloaraneosene is then hydroxylated four times by the putative cytochrome P450 monooxygenases sdnB, sdnE, sdnF and sdnH to give a hydroxylated cycloaraneosene derivative such as cycloaraneosene-8,9,13,19-tetraol. Although the order of the hydroxylations is unclear, at least C8, C9 and C13 of the cycloaraneosene skeleton are hydroxylated before the sordaricin formation. Dehydration of the 13-hydroxy group of the hydroxylated cycloaraneosene derivative might be catalyzed by an unassigned hypothetical protein such as sdnG and sdnP to construct the cyclopentadiene moiety. The FAD-dependent oxidoreductase sdnN is proposed to catalyze the oxidation at C9 of the hydroxylated cycloaraneosene derivative and also catalyze the Baeyer-Villiger oxidation to give the lactone intermediate. The presumed lactone intermediate would be hydrolyzed to give an acrolein moiety and a carboxylate moiety. Then, [4+2]cycloaddition would occur between the acrolein moiety and the cyclopentadiene moiety to give sordaricin. SdnN might also be involved in the [4+2]cycloaddition after the hypothesized oxidation to accommodate the oxidized product and prompt the [4+2]cycloaddition. GDP-6-deoxy-D-altrose may be biosynthesized from GDP-D-mannose by the putative GDP-mannose-4,6-dehydratase sdnI and the short-chain dehydrogenase sdnK. The glycosyltransferase sdnJ catalyzes the attachment of 6-deoxy-D-altrose onto the 19-hydroxy group of sordaricin to give 4'-O-demethylsordarin. The methyltransferase sdnD would complete the biosynthesis of sordarin. Sordarin can be further modified into hypoxysordarin. The unique acyl chain at the 3'-hydroxy group of hypoxysordarin would be constructed by an iterative type I PKS sdnO and the trans-acting polyketide methyltransferase sdnL. SdnL would be responsible for the introduction of an alpha-methyl group of the polyketide chain. Alternatively, the beta-lactamase-like protein sdnR might be responsible for the cleavage and transfer of the polyketide chain from the PKS sdnO to sordarin. Two putative cytochrome P450 monooxygenases, sdnQ and sdnT, might catalyze the epoxidations of the polyketide chain to complete the biosynthesis of hypoxysordarin. Transcriptional regulators sdnM and sdnS are presumably encoded for the transcriptional regulation of the expression of the sdn gene cluster. The chain is Cytochrome P450 monooxygenase sdnF from Sordaria araneosa (Pleurage araneosa).